The sequence spans 393 residues: Putative N(4)-(beta-N-acetylglucosaminyl)-L-asparaginase GM21137 (393 aa).

A signal peptide spans 1–23; sequence MRTHLRASLWVLCLASTAFSILA. 2 disulfides stabilise this stretch: Cys-97/Cys-102 and Cys-196/Cys-212. Residue Thr-243 is the Nucleophile of the active site. Substrate is bound by residues 271–274 and 294–297; these read RVGD and TGDG. Cysteines 354 and 381 form a disulfide.

It belongs to the Ntn-hydrolase family. As to quaternary structure, heterotetramer of two alpha and two beta chains arranged as a dimer of alpha/beta heterodimers. Post-translationally, cleaved into an alpha and beta chain by autocatalysis; this activates the enzyme. The N-terminal residue of the beta subunit is responsible for the nucleophile hydrolase activity.

It carries out the reaction N(4)-(beta-N-acetyl-D-glucosaminyl)-L-asparagine + H2O = N-acetyl-beta-D-glucosaminylamine + L-aspartate + H(+). Cleaves the GlcNAc-Asn bond which joins oligosaccharides to the peptide of asparagine-linked glycoproteins. The polypeptide is Putative N(4)-(beta-N-acetylglucosaminyl)-L-asparaginase GM21137 (Drosophila sechellia (Fruit fly)).